Reading from the N-terminus, the 452-residue chain is Phosphoglucosamine mutase (452 aa).

Ser-103 serves as the catalytic Phosphoserine intermediate. Mg(2+)-binding residues include Ser-103, Asp-244, Asp-246, and Asp-248. Ser-103 bears the Phosphoserine mark.

The protein belongs to the phosphohexose mutase family. Mg(2+) is required as a cofactor. Activated by phosphorylation.

The enzyme catalyses alpha-D-glucosamine 1-phosphate = D-glucosamine 6-phosphate. Functionally, catalyzes the conversion of glucosamine-6-phosphate to glucosamine-1-phosphate. This is Phosphoglucosamine mutase from Fusobacterium nucleatum subsp. nucleatum (strain ATCC 25586 / DSM 15643 / BCRC 10681 / CIP 101130 / JCM 8532 / KCTC 2640 / LMG 13131 / VPI 4355).